Consider the following 100-residue polypeptide: C-X-C motif chemokine 11 (100 aa).

An N-terminal signal peptide occupies residues 1-21 (MNRKVTAIALAAIIWATAAQG). 2 disulfide bridges follow: cysteine 30–cysteine 57 and cysteine 32–cysteine 74.

Belongs to the intercrine alpha (chemokine CxC) family. In terms of assembly, interacts with TNFAIP6 (via Link domain).

The protein resides in the secreted. Its function is as follows. Chemotactic for interleukin-activated T-cells but not unstimulated T-cells, neutrophils or monocytes. Induces calcium release in activated T-cells. Binds to CXCR3. May play an important role in CNS diseases which involve T-cell recruitment. May play a role in skin immune responses. This Mus musculus (Mouse) protein is C-X-C motif chemokine 11 (Cxcl11).